The following is a 121-amino-acid chain: Large ribosomal subunit protein bL12 (121 aa).

It belongs to the bacterial ribosomal protein bL12 family. In terms of assembly, homodimer. Part of the ribosomal stalk of the 50S ribosomal subunit. Forms a multimeric L10(L12)X complex, where L10 forms an elongated spine to which 2 to 4 L12 dimers bind in a sequential fashion. Binds GTP-bound translation factors.

In terms of biological role, forms part of the ribosomal stalk which helps the ribosome interact with GTP-bound translation factors. Is thus essential for accurate translation. The chain is Large ribosomal subunit protein bL12 from Clostridium beijerinckii (strain ATCC 51743 / NCIMB 8052) (Clostridium acetobutylicum).